The primary structure comprises 130 residues: Small ribosomal subunit protein uS9 (130 aa).

The protein belongs to the universal ribosomal protein uS9 family.

This chain is Small ribosomal subunit protein uS9, found in Shigella dysenteriae serotype 1 (strain Sd197).